The sequence spans 324 residues: Hairy/enhancer-of-split related with YRPW motif protein 2 (324 aa).

The tract at residues 1 to 34 is disordered; that stretch reads MKRPCEDSTSDSDMDETIDVGSENNYSGQSNGSF. Acidic residues predominate over residues 8-18; that stretch reads STSDSDMDETI. Positions 22–34 are enriched in polar residues; it reads SENNYSGQSNGSF. In terms of domain architecture, bHLH spans 48–103; sequence ARKKRRGIIEKRRRDRINNSLSELRRLVPTAFEKQGSAKLEKAEILQMTVDHLKML. Residues 122–157 form the Orange domain; it reads LSIGFRECLTEVARYLSSVEGLDSSDPLRVRLVSHL. Positions 294–311 are enriched in low complexity; the sequence is SSSVSTSTTSQQSSGSSS. The tract at residues 294-324 is disordered; the sequence is SSSVSTSTTSQQSSGSSSKPYRPWGTEVGAF. A YRPW motif motif is present at residues 314 to 317; that stretch reads YRPW.

Belongs to the HEY family.

It is found in the nucleus. Transcriptional repressor. Downstream effector of Notch signaling which regulates cell fate choice in angioblasts. Represses the venous cell fate, thereby promoting the arterial cell fate and aorta formation. In Danio rerio (Zebrafish), this protein is Hairy/enhancer-of-split related with YRPW motif protein 2 (hey2).